We begin with the raw amino-acid sequence, 159 residues long: CASP-like protein 5C1 (159 aa).

Topologically, residues 1–6 are cytoplasmic; the sequence is MDNGDR. Residues 7–29 traverse the membrane as a helical segment; that stretch reads SGAGAGAVGSAGSLGLRVGQAVF. Residues 30-48 lie on the Extracellular side of the membrane; the sequence is SSASLLFMSVGVEFFSYTA. Residues 49-69 form a helical membrane-spanning segment; sequence FCFLVTIMGLVIPWSCTLAMI. The Cytoplasmic portion of the chain corresponds to 70-94; sequence DVYSVFVGCPLRVPGVMVIVVVGDC. A helical transmembrane segment spans residues 95-117; that stretch reads ALSIVSFAAACSSAAVIDLLLQL. Residues 118–134 lie on the Extracellular side of the membrane; sequence HGSHSSPTFCGRYQLSA. Residues 135–155 form a helical membrane-spanning segment; that stretch reads MMAFLSWLLMAASATFNLWFV. Residues 156–159 are Cytoplasmic-facing; it reads ASRW.

It belongs to the Casparian strip membrane proteins (CASP) family. Homodimer and heterodimers.

It localises to the cell membrane. This chain is CASP-like protein 5C1, found in Zea mays (Maize).